The chain runs to 204 residues: LexA repressor (204 aa).

Residues 28–48 (VREIGEAVGLASSSTVHGHLD) constitute a DNA-binding region (H-T-H motif). Active-site for autocatalytic cleavage activity residues include S126 and K164.

The protein belongs to the peptidase S24 family. As to quaternary structure, homodimer.

The catalysed reaction is Hydrolysis of Ala-|-Gly bond in repressor LexA.. Represses a number of genes involved in the response to DNA damage (SOS response), including recA and lexA. In the presence of single-stranded DNA, RecA interacts with LexA causing an autocatalytic cleavage which disrupts the DNA-binding part of LexA, leading to derepression of the SOS regulon and eventually DNA repair. The sequence is that of LexA repressor from Exiguobacterium sibiricum (strain DSM 17290 / CCUG 55495 / CIP 109462 / JCM 13490 / 255-15).